A 389-amino-acid chain; its full sequence is Phospho-N-acetylmuramoyl-pentapeptide-transferase (389 aa).

The next 10 membrane-spanning stretches (helical) occupy residues 21 to 41 (FITFRAVFATLTALVIGLVTG), 70 to 90 (GTPTMGGVLILVSIGISTLLW), 97 to 117 (FIWVVLIVTLGFGAVGWVDDY), 134 to 154 (YMWQSIIGLFAAIYLAFSVSA), 189 to 209 (TISYPLGVWGFIALTYFVIVG), 222 to 242 (GLAIMPTVMVGTALGLFAYLT), 259 to 279 (AGELIIFCGAMAGAGLAFLWF), 286 to 306 (VFMGDVGALALGGALGTIAVI), 311 to 331 (VVLFIMGGIFVVETLSVMLQV), and 366 to 386 (QVVVRFWIITMMLVLFGLSTL).

This sequence belongs to the glycosyltransferase 4 family. MraY subfamily. It depends on Mg(2+) as a cofactor.

The protein localises to the cell inner membrane. It carries out the reaction UDP-N-acetyl-alpha-D-muramoyl-L-alanyl-gamma-D-glutamyl-meso-2,6-diaminopimeloyl-D-alanyl-D-alanine + di-trans,octa-cis-undecaprenyl phosphate = di-trans,octa-cis-undecaprenyl diphospho-N-acetyl-alpha-D-muramoyl-L-alanyl-D-glutamyl-meso-2,6-diaminopimeloyl-D-alanyl-D-alanine + UMP. It participates in cell wall biogenesis; peptidoglycan biosynthesis. Functionally, catalyzes the initial step of the lipid cycle reactions in the biosynthesis of the cell wall peptidoglycan: transfers peptidoglycan precursor phospho-MurNAc-pentapeptide from UDP-MurNAc-pentapeptide onto the lipid carrier undecaprenyl phosphate, yielding undecaprenyl-pyrophosphoryl-MurNAc-pentapeptide, known as lipid I. The polypeptide is Phospho-N-acetylmuramoyl-pentapeptide-transferase (Janthinobacterium sp. (strain Marseille) (Minibacterium massiliensis)).